The sequence spans 609 residues: Glutamine--fructose-6-phosphate aminotransferase [isomerizing] (609 aa).

Residue C2 is the Nucleophile; for GATase activity of the active site. Positions 2 to 217 (CGIVGAIAGR…DGDTAEIRRD (216 aa)) constitute a Glutamine amidotransferase type-2 domain. 2 SIS domains span residues 285-425 (AESV…LRGA) and 458-599 (WAEC…VDKP). K604 acts as the For Fru-6P isomerization activity in catalysis.

In terms of assembly, homodimer.

The protein localises to the cytoplasm. It catalyses the reaction D-fructose 6-phosphate + L-glutamine = D-glucosamine 6-phosphate + L-glutamate. Functionally, catalyzes the first step in hexosamine metabolism, converting fructose-6P into glucosamine-6P using glutamine as a nitrogen source. The chain is Glutamine--fructose-6-phosphate aminotransferase [isomerizing] from Xylella fastidiosa (strain Temecula1 / ATCC 700964).